A 238-amino-acid chain; its full sequence is MPSSTYPRRRFDEVFLVEISSRILVTQEKHQQEEEEKKVRMAGKANVSVLMSEDASFHQKVAVEKRLKIGEVILRFAMIALALVAAVRVGTDTQTRTIFTIEKKAKYSDMKALVFLVVMNGIVASYSLLQGLRCVLSIYTQSPLTSKPLAWLIFALDQTMAYFSLAAAAAAAESAYLAERGQTEFQWMKVCIFYEKFCHQIGEGLVSTFLVSLSMATVSGMSAYHLFRLYGSKGKSIQ.

The Cytoplasmic portion of the chain corresponds to 1–66 (MPSSTYPRRR…FHQKVAVEKR (66 aa)). The helical transmembrane segment at 67–87 (LKIGEVILRFAMIALALVAAV) threads the bilayer. The Extracellular portion of the chain corresponds to 88–111 (RVGTDTQTRTIFTIEKKAKYSDMK). Residues 112-132 (ALVFLVVMNGIVASYSLLQGL) form a helical membrane-spanning segment. Over 133–148 (RCVLSIYTQSPLTSKP) the chain is Cytoplasmic. Residues 149 to 169 (LAWLIFALDQTMAYFSLAAAA) form a helical membrane-spanning segment. Residues 170–200 (AAAESAYLAERGQTEFQWMKVCIFYEKFCHQ) are Extracellular-facing. The helical transmembrane segment at 201–221 (IGEGLVSTFLVSLSMATVSGM) threads the bilayer. Topologically, residues 222-238 (SAYHLFRLYGSKGKSIQ) are cytoplasmic.

The protein belongs to the Casparian strip membrane proteins (CASP) family. As to quaternary structure, homodimer and heterodimers.

Its subcellular location is the cell membrane. This is CASP-like protein 2BC2 from Picea sitchensis (Sitka spruce).